Here is a 553-residue protein sequence, read N- to C-terminus: Putative transport protein YidE (553 aa).

5 helical membrane-spanning segments follow: residues 4 to 24, 28 to 48, 65 to 85, 95 to 115, and 158 to 178; these read IALT…IGNI, GVGF…HFVD, FGLI…FFAS, LFAV…HKIF, and MSYA…MWLM. RCK C-terminal domains follow at residues 192–276 and 279–361; these read KHES…VIGK and DTSL…VVGN. The next 6 membrane-spanning stretches (helical) occupy residues 371 to 391, 393 to 413, 437 to 457, 464 to 484, 493 to 513, and 533 to 553; these read MLPV…PLFV, GFPV…ALIL, LGIV…FVDT, LSWI…IGLL, YLTL…LAFA, and LVMF…WGMG.

The protein belongs to the AAE transporter (TC 2.A.81) family. YidE subfamily.

It localises to the cell membrane. The polypeptide is Putative transport protein YidE (Salmonella paratyphi C (strain RKS4594)).